Reading from the N-terminus, the 413-residue chain is Ribulose bisphosphate carboxylase/oxygenase activase, chloroplastic (413 aa).

Residues 1–54 constitute a chloroplast transit peptide; sequence MAATVSTIGAVNRTTLNNSNYGGLVPNSAFLGSRLKVSSRFTTSKMVTGNFKIV. 162-169 is an ATP binding site; that stretch reads GGKGQGKS.

This sequence belongs to the RuBisCO activase family.

The protein localises to the plastid. It is found in the chloroplast stroma. Activation of RuBisCO (ribulose-1,5-bisphosphate carboxylase/oxygenase; EC 4.1.1.39) involves the ATP-dependent carboxylation of the epsilon-amino group of lysine leading to a carbamate structure. In Cucumis sativus (Cucumber), this protein is Ribulose bisphosphate carboxylase/oxygenase activase, chloroplastic.